Consider the following 706-residue polypeptide: Choline transporter-like protein 2 (706 aa).

The Cytoplasmic portion of the chain corresponds to 1–32 (MMELEGEKPNYGEPRKYDPTFKGPIYNRGCTD). A helical membrane pass occupies residues 33-53 (IVCCIFFIICILGYVAVGILA). Topologically, residues 54 to 232 (WSQGDPRKVI…KIFEDYTQSW (179 aa)) are extracellular. Residues Asn-187 and Asn-210 are each glycosylated (N-linked (GlcNAc...) asparagine). A helical transmembrane segment spans residues 233-253 (YWILIGLVIAMLISLLFIVLL). Over 254 to 256 (RFL) the chain is Cytoplasmic. The helical transmembrane segment at 257-277 (AGIMVWVMIVMVILVIGYGIF) threads the bilayer. Topologically, residues 278–315 (HCSMEYVSLKSEAGSNVTLKDLGFQTDFSVYLHIRQTW) are extracellular. Asn-293 carries an N-linked (GlcNAc...) asparagine glycan. The chain crosses the membrane as a helical span at residues 316 to 336 (LAFIIILAIVEVVIILLLIFL). At 337-364 (RNRILIAIALIKEASRAIGYVMSALFYP) the chain is on the cytoplasmic side. The chain crosses the membrane as a helical span at residues 365–385 (LFTFALLSIVIAYWAVTAVFL). Residues 386–454 (STSNQPIYKV…LQFYNVFLFF (69 aa)) lie on the Extracellular side of the membrane. Asn-397 and Asn-412 each carry an N-linked (GlcNAc...) asparagine glycan. The chain crosses the membrane as a helical span at residues 455–477 (WCANFVTALGQMTLAGAFASYYW). Residues 478 to 504 (ALVKPDDMPAFPIFSSLGRSLRYHTGS) are Cytoplasmic-facing. Residues 505–525 (LAFGSLILSIIQIIRVLLEYI) traverse the membrane as a helical segment. Residues 526 to 599 (DHKLQGTQNK…RVAVLDKVTD (74 aa)) lie on the Extracellular side of the membrane. The helical transmembrane segment at 600–620 (FLLFLGKLLIVGLVGIFAFFF) threads the bilayer. Topologically, residues 621 to 638 (FSGRVKAFENTAPNLHYY) are cytoplasmic. A helical transmembrane segment spans residues 639–659 (WVPILTVVVGSYLIAHGFFSV). At 660–706 (YAMCVDTLFLCFLEDLERNDGSAERPYLMSDRLLKVLNKKNKPEPAE) the chain is on the extracellular side.

This sequence belongs to the CTL (choline transporter-like) family.

The protein localises to the cell membrane. It is found in the mitochondrion outer membrane. The catalysed reaction is choline(out) + n H(+)(in) = choline(in) + n H(+)(out). It carries out the reaction ethanolamine(out) + n H(+)(in) = ethanolamine(in) + n H(+)(out). Functionally, choline/H+ antiporter, mainly in mitochodria. Also acts as a low-affinity ethanolamine/H+ antiporter, regulating the supply of extracellular ethanolamine (Etn) for the CDP-Etn pathway, redistribute intracellular Etn and balance the CDP-Cho and CDP-Etn arms of the Kennedy pathway. The sequence is that of Choline transporter-like protein 2 (slc44a2) from Salmo salar (Atlantic salmon).